Consider the following 151-residue polypeptide: Acidic phospholipase A2 3 (151 aa).

Residues 1–27 (MYPAHLLVLLAVCVSLLGAASIPARPL) form the signal peptide. 7 disulfides stabilise this stretch: Cys-38–Cys-104, Cys-54–Cys-151, Cys-56–Cys-72, Cys-71–Cys-132, Cys-78–Cys-125, Cys-88–Cys-118, and Cys-111–Cys-123. Residues Tyr-55, Gly-57, and Gly-59 each coordinate Ca(2+). His-75 is an active-site residue. Residue Asp-76 participates in Ca(2+) binding. Asp-126 is a catalytic residue.

The protein belongs to the phospholipase A2 family. Group I subfamily. D49 sub-subfamily. The cofactor is Ca(2+). In terms of tissue distribution, expressed by the venom gland.

It localises to the secreted. It carries out the reaction a 1,2-diacyl-sn-glycero-3-phosphocholine + H2O = a 1-acyl-sn-glycero-3-phosphocholine + a fatty acid + H(+). PLA2 catalyzes the calcium-dependent hydrolysis of the 2-acyl groups in 3-sn-phosphoglycerides. This is Acidic phospholipase A2 3 from Tropidechis carinatus (Australian rough-scaled snake).